Here is a 372-residue protein sequence, read N- to C-terminus: Cytochrome b (372 aa).

4 helical membrane-spanning segments follow: residues 32 to 52 (LGFN…CLSW), 77 to 99 (FIIR…IHII), 114 to 134 (VWFF…IGYT), and 180 to 200 (LHSI…AHFF). Heme b is bound by residues His83 and His97. The heme b site is built by His184 and His198. His203 contacts a ubiquinone. Helical transmembrane passes span 228–248 (YYLR…YYIC), 297–317 (LLFV…LIFI), 330–350 (LVLF…VLCF), and 351–371 (PLWM…VCRL).

Belongs to the cytochrome b family. The main subunits of complex b-c1 are: cytochrome b, cytochrome c1 and the Rieske protein. Requires heme b as cofactor.

It localises to the mitochondrion inner membrane. Its function is as follows. Component of the ubiquinol-cytochrome c reductase complex (complex III or cytochrome b-c1 complex) that is part of the mitochondrial respiratory chain. The b-c1 complex mediates electron transfer from ubiquinol to cytochrome c. Contributes to the generation of a proton gradient across the mitochondrial membrane that is then used for ATP synthesis. This chain is Cytochrome b (MT-CYB), found in Trypanoplasma borreli.